The chain runs to 239 residues: Ditrans,polycis-undecaprenyl-diphosphate synthase ((2E,6E)-farnesyl-diphosphate specific) (239 aa).

D18 is an active-site residue. A Mg(2+)-binding site is contributed by D18. Substrate contacts are provided by residues 19–22, W23, R31, H35, and 63–65; these read GNGR and SSE. N66 serves as the catalytic Proton acceptor. Residues W67, R69, R186, and 192 to 194 contribute to the substrate site; that span reads RIS. E205 provides a ligand contact to Mg(2+).

Belongs to the UPP synthase family. In terms of assembly, homodimer. Mg(2+) serves as cofactor.

The catalysed reaction is 8 isopentenyl diphosphate + (2E,6E)-farnesyl diphosphate = di-trans,octa-cis-undecaprenyl diphosphate + 8 diphosphate. Functionally, catalyzes the sequential condensation of isopentenyl diphosphate (IPP) with (2E,6E)-farnesyl diphosphate (E,E-FPP) to yield (2Z,6Z,10Z,14Z,18Z,22Z,26Z,30Z,34E,38E)-undecaprenyl diphosphate (di-trans,octa-cis-UPP). UPP is the precursor of glycosyl carrier lipid in the biosynthesis of bacterial cell wall polysaccharide components such as peptidoglycan and lipopolysaccharide. This chain is Ditrans,polycis-undecaprenyl-diphosphate synthase ((2E,6E)-farnesyl-diphosphate specific), found in Haemophilus influenzae (strain ATCC 51907 / DSM 11121 / KW20 / Rd).